A 163-amino-acid polypeptide reads, in one-letter code: Nucleotide-binding protein DvMF_3058 (163 aa).

It belongs to the YajQ family.

Functionally, nucleotide-binding protein. The chain is Nucleotide-binding protein DvMF_3058 from Nitratidesulfovibrio vulgaris (strain DSM 19637 / Miyazaki F) (Desulfovibrio vulgaris).